Reading from the N-terminus, the 334-residue chain is NmrA-like family domain-containing oxidoreductase lnaB (334 aa).

NADP(+)-binding positions include 12–17 (GGTGKQ), 38–42 (RNAQS), 59–60 (DG), 80–82 (INS), Lys138, and 162–165 (FLEN).

Belongs to the NmrA-type oxidoreductase family.

The protein operates within secondary metabolite biosynthesis. In terms of biological role, nmrA-like family domain-containing oxidoreductase; part of the lna gene cluster that mediates the biosynthesis of diastereomeric piperazines. Lna and lnb clusters encode sets of enzymes that produce overlapping sets of previously undescribed metabolites such as piperazinomycin-like metabolites or morpholine. The lna and lnb biosynthetic pathways appear to be part of a signaling network that controls the formation of sclerotia, a resilient overwintering structure. One primary function of the non-canonical nonribosomal peptide synthetases lnaA and lnbA consists in the reduction of L-tyrosine. The presence in the clusters of tailoring enzymes such as the oxidoreductases lnaB, lnbB, lnaE or lnbE, as well as of the cytochrome P450 monooxygenases lnaC, lnaD, or lnbC, might explain formation of various diastereomeric piperazines. This Aspergillus flavus (strain ATCC 200026 / FGSC A1120 / IAM 13836 / NRRL 3357 / JCM 12722 / SRRC 167) protein is NmrA-like family domain-containing oxidoreductase lnaB.